A 578-amino-acid chain; its full sequence is Polypeptide N-acetylgalactosaminyltransferase 4 (578 aa).

The Cytoplasmic segment spans residues 1-12 (MAVRWTWAGKSC). Residues 13 to 35 (LLLALLTLAYILVEFSVSTLYAS) form a helical; Signal-anchor for type II membrane protein membrane-spanning segment. Residues 36 to 578 (PGAGGARELG…DKNQLWRFEK (543 aa)) lie on the Lumenal side of the membrane. Disulfide bonds link Cys124/Cys357, Cys348/Cys421, Cys457/Cys477, Cys503/Cys518, and Cys547/Cys565. The tract at residues 134 to 243 (LPTTSVIIAF…TGWLEPLLER (110 aa)) is catalytic subdomain A. Substrate contacts are provided by Asp175 and Arg204. Mn(2+) contacts are provided by Asp227 and His229. Residues 303-365 (PIRSPTMAGG…PCSHVGHVFP (63 aa)) are catalytic subdomain B. Residue Trp334 participates in substrate binding. His362 contributes to the Mn(2+) binding site. Tyr370 lines the substrate pocket. Residues 444 to 577 (WHGAIRSMGI…LDKNQLWRFE (134 aa)) form the Ricin B-type lectin domain. The N-linked (GlcNAc...) asparagine glycan is linked to Asn471.

It belongs to the glycosyltransferase 2 family. GalNAc-T subfamily. Mn(2+) is required as a cofactor. Highly expressed in sublingual gland, stomach, colon, small intestine and cervix. Expressed at intermediate levels in kidney, ovary, lung and uterus. Weakly expressed in spleen, liver, heart and brain. Not expressed in submandibular and parotid glands, skeletal muscle and testis.

The protein resides in the golgi apparatus membrane. The catalysed reaction is L-seryl-[protein] + UDP-N-acetyl-alpha-D-galactosamine = a 3-O-[N-acetyl-alpha-D-galactosaminyl]-L-seryl-[protein] + UDP + H(+). It catalyses the reaction L-threonyl-[protein] + UDP-N-acetyl-alpha-D-galactosamine = a 3-O-[N-acetyl-alpha-D-galactosaminyl]-L-threonyl-[protein] + UDP + H(+). It participates in protein modification; protein glycosylation. Functionally, catalyzes the initial reaction in O-linked oligosaccharide biosynthesis, the transfer of an N-acetyl-D-galactosamine residue to a serine or threonine residue on the protein receptor. Has a highest activity toward EA2 peptide substrate and a much lower activity with EPO-T, Muc2, Muc1a, Muc1b. The protein is Polypeptide N-acetylgalactosaminyltransferase 4 (Galnt4) of Mus musculus (Mouse).